A 555-amino-acid chain; its full sequence is MAAAAWLQVLPVILLLLGAHPSPLSFFSAGPATVAAADRSKWHIPIPSGKNYFSFGKILFRNTTIFLKFDGEPCDLSLNITWYLKSADCYNEIYNFKAEEVELYLEKLKEKRGLSGKYQTSSKLFQNCSELFKTQTFSGDFMHRLPLLGEKQEAKENGTNLTFIGDKTAMHEPLQTWQDAPYIFIVHIGISSSKESSKENSLSNLFTMTVEVKGPYEYLTLEDYPLMIFFMVMCIVYVLFGVLWLAWSACYWRDLLRIQFWIGAVIFLGMLEKAVFYAEFQNIRYKGESVQGALILAELLSAVKRSLARTLVIIVSLGYGIVKPRLGVTLHKVVVAGALYLLFSGMEGVLRVTGAQTDLASLAFIPLAFLDTALCWWIFISLTQTMKLLKLRRNIVKLSLYRHFTNTLILAVAASIVFIIWTTMKFRIVTCQSDWRELWVDDAIWRLLFSMILFVIMVLWRPSANNQRFAFSPLSEEEEEDEQKEPMLKESFEGMKMRSTKQEPNGNSKVNKAQEDDLKWVEENVPSSVTDVALPALLDSDEERMITHFERSKME.

A signal peptide spans 1–21 (MAAAAWLQVLPVILLLLGAHP). Topologically, residues 22-225 (SPLSFFSAGP…YEYLTLEDYP (204 aa)) are lumenal. Cystine bridges form between cysteine 74–cysteine 128 and cysteine 89–cysteine 431. Residues asparagine 79, asparagine 127, asparagine 157, and asparagine 160 are each glycosylated (N-linked (GlcNAc...) asparagine). The helical transmembrane segment at 226–246 (LMIFFMVMCIVYVLFGVLWLA) threads the bilayer. The Cytoplasmic portion of the chain corresponds to 247–257 (WSACYWRDLLR). Residues 258 to 278 (IQFWIGAVIFLGMLEKAVFYA) traverse the membrane as a helical segment. Over 279-305 (EFQNIRYKGESVQGALILAELLSAVKR) the chain is Lumenal. The helical transmembrane segment at 306–322 (SLARTLVIIVSLGYGIV) threads the bilayer. Residues 323-325 (KPR) lie on the Cytoplasmic side of the membrane. A helical transmembrane segment spans residues 326–346 (LGVTLHKVVVAGALYLLFSGM). The Lumenal portion of the chain corresponds to 347–361 (EGVLRVTGAQTDLAS). Residues 362-382 (LAFIPLAFLDTALCWWIFISL) traverse the membrane as a helical segment. The Cytoplasmic segment spans residues 383–403 (TQTMKLLKLRRNIVKLSLYRH). A helical transmembrane segment spans residues 404 to 424 (FTNTLILAVAASIVFIIWTTM). At 425–437 (KFRIVTCQSDWRE) the chain is on the lumenal side. Residues 438 to 458 (LWVDDAIWRLLFSMILFVIMV) form a helical membrane-spanning segment. Residues 459 to 555 (LWRPSANNQR…ITHFERSKME (97 aa)) are Cytoplasmic-facing. The interval 473 to 516 (PLSEEEEEDEQKEPMLKESFEGMKMRSTKQEPNGNSKVNKAQED) is disordered. Residues 484-496 (KEPMLKESFEGMK) show a composition bias toward basic and acidic residues. Polar residues predominate over residues 502 to 511 (QEPNGNSKVN). The residue at position 540 (serine 540) is a Phosphoserine.

This sequence belongs to the LU7TM family. TMEM87 subfamily. As to quaternary structure, may interact with STOML3; STOML3 potentiates the mechanosensitive ion channel activity associated with TMEM87A.

It is found in the cell membrane. Its subcellular location is the golgi apparatus membrane. The protein resides in the cell projection. It localises to the ruffle. In terms of biological role, potential monoatomic ion channel gated by mechanical force, implicated in normal touch sensitivity through the generation of mechanically activated currents. However, a direct channel activity is debated and an alternative could be that it functions as a chaperone for an unidentified mechanosensitive ion channel. Could also be involved in cell mechanosensitivity regulating cell adhesion and migration. May also be involved in retrograde transport from endosomes to the trans-Golgi network (TGN). The chain is Transmembrane protein 87A from Homo sapiens (Human).